Consider the following 414-residue polypeptide: 2,3-diketo-5-methylthiopentyl-1-phosphate enolase (414 aa).

Lysine 99 acts as the Proton acceptor in catalysis. Substrate-binding positions include lysine 148, 174 to 177 (KDDE), histidine 265, glycine 338, and 360 to 361 (GG). Positions 174, 176, and 177 each coordinate Mg(2+). Lysine 174 is subject to N6-carboxylysine.

Belongs to the RuBisCO large chain family. Type IV subfamily. Homodimer. Requires Mg(2+) as cofactor.

The enzyme catalyses 5-methylsulfanyl-2,3-dioxopentyl phosphate = 2-hydroxy-5-methylsulfanyl-3-oxopent-1-enyl phosphate. Its pathway is amino-acid biosynthesis; L-methionine biosynthesis via salvage pathway; L-methionine from S-methyl-5-thio-alpha-D-ribose 1-phosphate: step 3/6. Its function is as follows. Catalyzes the enolization of 2,3-diketo-5-methylthiopentyl-1-phosphate (DK-MTP-1-P) into 2-hydroxy-3-keto-5-methylthiopentenyl-1-phosphate (HK-MTPenyl-1-P). The chain is 2,3-diketo-5-methylthiopentyl-1-phosphate enolase from Bacillus anthracis (strain CDC 684 / NRRL 3495).